A 571-amino-acid chain; its full sequence is MDLHQLLKYRLTGANVVYEIPTENNLQNSPWQANPLKYEFSDSPYTPLSSQFECDNLSALTNTPDNQSSTETISAQPISPLEADSSYRQAGILLQENIQVGADPLYATSRHNMQHALREIETVLMAPDTDDATTSTKHEFEEIKPAQLVRQRSRTWSHESRQPLPGVGRSQFASGGYPTASYEFRPEKRQRELREDPQIIVKQLLTRCAEALSEDRTEEFHKLVQEARGVVSINGEPIQRLGAYLLEGLVARHGNSGTNIYRALKCREPESKELLSYMRILYNICPYFKFGYMAANGAIAEALRTENNIHIIDFQIAQGTQWITLIQALAARPGGPPRVRITGIDDPVSEYARGEGLDIVGKMLKSMSEEFKIPLEFTPLSVYATQVTKEMLEIRPGEALSVNFTLQLHHTPDESVDVNNPRDGLLRMVKGLSPKVTTLVEQESHTNTTPFLMRFGETMEYYSAMFESIDANLPRDNKERISVEQHCLAKDIVNIIACEGKDRVERHELLGKWKSRLTMAGFRPYPLSSYVNSVIRKLLACYSDKYTLDEKDGAMLLGWRSRKLISASAWH.

Polar residues predominate over residues 61–77; sequence TNTPDNQSSTETISAQP. 2 disordered regions span residues 61-80 and 151-180; these read TNTP…PISP and QRSR…YPTA. Residues 192 to 571 form the GRAS domain; that stretch reads ELREDPQIIV…RKLISASAWH (380 aa). Residues 199–259 are leucine repeat I (LRI); the sequence is IIVKQLLTRC…VARHGNSGTN (61 aa). Residues 278 to 343 form a VHIID region; that stretch reads MRILYNICPY…GGPPRVRITG (66 aa). The short motif at 309-313 is the VHIID element; the sequence is IHIID. The tract at residues 359 to 391 is leucine repeat II (LRII); that stretch reads IVGKMLKSMSEEFKIPLEFTPLSVYATQVTKEM. Residues 400–494 form a PFYRE region; it reads LSVNFTLQLH…QHCLAKDIVN (95 aa). Residues 497-571 form an SAW region; sequence ACEGKDRVER…RKLISASAWH (75 aa).

This sequence belongs to the GRAS family.

It is found in the nucleus. Functionally, may play a regulatory role in the early step of oligosaccharide elicitor response, downstream of the membrane-associated high-affinity chitin-binding protein. The chain is Chitin-inducible gibberellin-responsive protein 1 (CIGR1) from Oryza sativa subsp. japonica (Rice).